Reading from the N-terminus, the 347-residue chain is NADH-ubiquinone oxidoreductase chain 2 (347 aa).

Helical transmembrane passes span 3-23 (PPIL…VLTS), 25-45 (HWLL…PILM), 60-80 (FLTQ…NLMF), 96-116 (GLVT…FWVP), 122-142 (ISLS…LSVL), 153-173 (LLIT…LNQT), 178-198 (ILAY…TYNP), 200-220 (LMVL…MLFM), 237-257 (LPLM…LPPL), 274-294 (DMII…YFYM), and 323-343 (IILL…TPMM).

It belongs to the complex I subunit 2 family. As to quaternary structure, core subunit of respiratory chain NADH dehydrogenase (Complex I) which is composed of 45 different subunits. Interacts with TMEM242.

Its subcellular location is the mitochondrion inner membrane. The catalysed reaction is a ubiquinone + NADH + 5 H(+)(in) = a ubiquinol + NAD(+) + 4 H(+)(out). Its function is as follows. Core subunit of the mitochondrial membrane respiratory chain NADH dehydrogenase (Complex I) which catalyzes electron transfer from NADH through the respiratory chain, using ubiquinone as an electron acceptor. Essential for the catalytic activity and assembly of complex I. The chain is NADH-ubiquinone oxidoreductase chain 2 from Phoca vitulina (Harbor seal).